A 108-amino-acid chain; its full sequence is Nucleoid-associated protein Avin_19840 (108 aa).

This sequence belongs to the YbaB/EbfC family. In terms of assembly, homodimer.

It is found in the cytoplasm. The protein resides in the nucleoid. Its function is as follows. Binds to DNA and alters its conformation. May be involved in regulation of gene expression, nucleoid organization and DNA protection. The sequence is that of Nucleoid-associated protein Avin_19840 from Azotobacter vinelandii (strain DJ / ATCC BAA-1303).